Here is a 219-residue protein sequence, read N- to C-terminus: Flagellar L-ring protein (219 aa).

The signal sequence occupies residues 1-14 (MKRLVLISLVLAAG). C15 is lipidated: N-palmitoyl cysteine. C15 is lipidated: S-diacylglycerol cysteine.

This sequence belongs to the FlgH family. The basal body constitutes a major portion of the flagellar organelle and consists of four rings (L,P,S, and M) mounted on a central rod.

It localises to the cell outer membrane. Its subcellular location is the bacterial flagellum basal body. Assembles around the rod to form the L-ring and probably protects the motor/basal body from shearing forces during rotation. This is Flagellar L-ring protein from Dechloromonas aromatica (strain RCB).